Reading from the N-terminus, the 103-residue chain is Large ribosomal subunit protein bL21 (103 aa).

The protein belongs to the bacterial ribosomal protein bL21 family. In terms of assembly, part of the 50S ribosomal subunit. Contacts protein L20.

Functionally, this protein binds to 23S rRNA in the presence of protein L20. The protein is Large ribosomal subunit protein bL21 of Shewanella frigidimarina (strain NCIMB 400).